A 209-amino-acid chain; its full sequence is Small ribosomal subunit protein uS4 (209 aa).

C9, C12, C26, and C31 together coordinate Zn(2+). The segment at 9–31 (CKLCRREGMKLYLKGERCYTDKC) adopts a C4-type zinc-finger fold. One can recognise an S4 RNA-binding domain in the interval 98–161 (ARLDNVVYRM…RDLEVIKKAI (64 aa)).

The protein belongs to the universal ribosomal protein uS4 family. In terms of assembly, part of the 30S ribosomal subunit. Contacts protein S5. The interaction surface between S4 and S5 is involved in control of translational fidelity. Requires Zn(2+) as cofactor.

One of the primary rRNA binding proteins, it binds directly to 16S rRNA where it nucleates assembly of the body of the 30S subunit. Functionally, with S5 and S12 plays an important role in translational accuracy. The sequence is that of Small ribosomal subunit protein uS4 (rpsD) from Thermotoga maritima (strain ATCC 43589 / DSM 3109 / JCM 10099 / NBRC 100826 / MSB8).